Consider the following 430-residue polypeptide: Trigger factor (430 aa).

The region spanning 163–248 is the PPIase FKBP-type domain; the sequence is GNIAIIDFKG…IKDIKVKELP (86 aa).

This sequence belongs to the FKBP-type PPIase family. Tig subfamily.

The protein localises to the cytoplasm. The catalysed reaction is [protein]-peptidylproline (omega=180) = [protein]-peptidylproline (omega=0). In terms of biological role, involved in protein export. Acts as a chaperone by maintaining the newly synthesized protein in an open conformation. Functions as a peptidyl-prolyl cis-trans isomerase. The sequence is that of Trigger factor from Clostridium botulinum (strain Langeland / NCTC 10281 / Type F).